Consider the following 143-residue polypeptide: Endoribonuclease YbeY (143 aa).

Zn(2+) is bound by residues His-109, His-113, and His-119.

It belongs to the endoribonuclease YbeY family. The cofactor is Zn(2+).

It is found in the cytoplasm. In terms of biological role, single strand-specific metallo-endoribonuclease involved in late-stage 70S ribosome quality control and in maturation of the 3' terminus of the 16S rRNA. This is Endoribonuclease YbeY from Leptospira borgpetersenii serovar Hardjo-bovis (strain JB197).